Here is a 316-residue protein sequence, read N- to C-terminus: SHC-transforming protein homolog 1 (316 aa).

Residues 16–158 (GVSLSATYLG…LIDVLTTAIN (143 aa)) form the PID domain. Positions 211 to 307 (WYHGNLSRED…ETSLNLIRPV (97 aa)) constitute an SH2 domain. The segment at 292-316 (SEGRDRETSLNLIRPVPCPGSDDIE) is disordered.

As to quaternary structure, interacts (via PID domain) with daf-2 (via cytoplasmic domain). Interacts with mek-1; the interaction is independent of mek-1 catalytic activity and is constitutive. Interacts (via N-terminus) with mlk-1 (via NPQY motif when phosphorylated on tyrosine residue). Does not interact with jkk-1 or sek-1. Interacts (via SH2 domain) with svh-2. Interacts with svh-4. As to expression, expressed in hypodermis, intestine, head and tail neurons, pharynx, gonads, vulva and body muscles.

It localises to the cytoplasm. The protein resides in the nucleus. The protein localises to the cell membrane. Scaffold protein which plays an important role in the activation of the JNK pathway composed of mlk-1, mek-1 and kgb-1; by bringing together mek-1 and mlk-1, promotes mlk-1-mediated phosphorylation and activation of mek-1 which in turn phosphorylates kgb-1. In addition, negatively modulates the activation of the insulin/IGF-1-like signaling (IIS) probably by inhibiting the insulin receptor daf-2. Positively regulates the activity of the transcription factor daf-16/FOXO by both inhibiting IIS and activating the JNK pathway. Plays a role in maintaining gonadal basement membrane integrity through activation of the JNK pathway components mek-1 and jnk-1. Involved in the response to several environmental stresses including heavy metal ions (Cu(2+) and Cd(2+)), heat, oxidative and protein misfolding (ER) stresses. Plays a role in gonad and germline development following the L1 diapause. Plays a role in life span and egg laying. Plays a role in axon regeneration after injury. This Caenorhabditis elegans protein is SHC-transforming protein homolog 1.